The chain runs to 481 residues: Glutamyl-tRNA(Gln) amidotransferase subunit A (481 aa).

Catalysis depends on charge relay system residues Lys-78 and Ser-153. Ser-177 serves as the catalytic Acyl-ester intermediate.

This sequence belongs to the amidase family. GatA subfamily. As to quaternary structure, heterotrimer of A, B and C subunits.

The catalysed reaction is L-glutamyl-tRNA(Gln) + L-glutamine + ATP + H2O = L-glutaminyl-tRNA(Gln) + L-glutamate + ADP + phosphate + H(+). In terms of biological role, allows the formation of correctly charged Gln-tRNA(Gln) through the transamidation of misacylated Glu-tRNA(Gln) in organisms which lack glutaminyl-tRNA synthetase. The reaction takes place in the presence of glutamine and ATP through an activated gamma-phospho-Glu-tRNA(Gln). The chain is Glutamyl-tRNA(Gln) amidotransferase subunit A from Borrelia garinii subsp. bavariensis (strain ATCC BAA-2496 / DSM 23469 / PBi) (Borreliella bavariensis).